Consider the following 502-residue polypeptide: Intracellular exo-alpha-(1-&gt;5)-L-arabinofuranosidase (502 aa).

The alpha-L-arabinofuranose site is built by Glu-29, Asn-74, and Asn-174. Glu-175 functions as the Proton donor/acceptor in the catalytic mechanism. Residues Tyr-246, Glu-294, and Gln-351 each contribute to the alpha-L-arabinofuranose site. Residue Glu-294 is the Nucleophile of the active site.

This sequence belongs to the glycosyl hydrolase 51 family. As to quaternary structure, homohexamer; trimer of dimers.

It localises to the cytoplasm. It catalyses the reaction Hydrolysis of terminal non-reducing alpha-L-arabinofuranoside residues in alpha-L-arabinosides.. It functions in the pathway glycan metabolism; L-arabinan degradation. Its activity is regulated as follows. Strongly inhibited by Hg(2+). Involved in the degradation of arabinan and is a key enzyme in the complete degradation of the plant cell wall. Catalyzes the cleavage of terminal alpha-(1-&gt;5)-arabinofuranosyl bonds in different hemicellulosic homopolysaccharides (branched and debranched arabinans). It acts preferentially on aryl-alpha-L-arabinofuranosides, and is much less effective on aryl-beta-D-xylopyranosides. In Geobacillus stearothermophilus (Bacillus stearothermophilus), this protein is Intracellular exo-alpha-(1-&gt;5)-L-arabinofuranosidase (abfA).